Reading from the N-terminus, the 408-residue chain is LL-diaminopimelate aminotransferase (408 aa).

Substrate is bound by residues tyrosine 15 and glycine 42. Pyridoxal 5'-phosphate contacts are provided by residues tyrosine 72, serine 108 to lysine 109, tyrosine 132, asparagine 187, tyrosine 218, and serine 246 to serine 248. Lysine 109, tyrosine 132, and asparagine 187 together coordinate substrate. Lysine 249 bears the N6-(pyridoxal phosphate)lysine mark. Positions 257 and 292 each coordinate pyridoxal 5'-phosphate. Substrate is bound by residues asparagine 292 and arginine 388.

Belongs to the class-I pyridoxal-phosphate-dependent aminotransferase family. LL-diaminopimelate aminotransferase subfamily. As to quaternary structure, homodimer. The cofactor is pyridoxal 5'-phosphate.

It carries out the reaction (2S,6S)-2,6-diaminopimelate + 2-oxoglutarate = (S)-2,3,4,5-tetrahydrodipicolinate + L-glutamate + H2O + H(+). The protein operates within amino-acid biosynthesis; L-lysine biosynthesis via DAP pathway; LL-2,6-diaminopimelate from (S)-tetrahydrodipicolinate (aminotransferase route): step 1/1. Involved in the synthesis of meso-diaminopimelate (m-DAP or DL-DAP), required for both lysine and peptidoglycan biosynthesis. Catalyzes the direct conversion of tetrahydrodipicolinate to LL-diaminopimelate. In Prochlorococcus marinus (strain MIT 9301), this protein is LL-diaminopimelate aminotransferase.